A 366-amino-acid polypeptide reads, in one-letter code: Elongation factor Ts, mitochondrial (366 aa).

A mitochondrion-targeting transit peptide spans 1–50; that stretch reads MAWSQSARKPMIGLLFRAQQHSARGYSYSAFQAHLSSSNVDQSATLLRRF.

It belongs to the EF-Ts family.

The protein localises to the mitochondrion. Its function is as follows. Associates with the EF-Tu.GDP complex and induces the exchange of GDP to GTP. It remains bound to the aminoacyl-tRNA.EF-Tu.GTP complex up to the GTP hydrolysis stage on the ribosome. The protein is Elongation factor Ts, mitochondrial of Oryza sativa subsp. japonica (Rice).